The chain runs to 124 residues: Putative peptidyl-tRNA hydrolase (124 aa).

The protein belongs to the PTH2 family.

It carries out the reaction an N-acyl-L-alpha-aminoacyl-tRNA + H2O = an N-acyl-L-amino acid + a tRNA + H(+). This Fowlpox virus (strain NVSL) (FPV) protein is Putative peptidyl-tRNA hydrolase.